Here is a 115-residue protein sequence, read N- to C-terminus: Non-specific lipid-transfer protein (115 aa).

A signal peptide spans 1-24; the sequence is MASSAVTKLALVVALCMAVSVAHA. Disulfide bonds link Cys27–Cys74, Cys37–Cys51, Cys52–Cys97, and Cys72–Cys111.

It belongs to the plant LTP family.

Functionally, plant non-specific lipid-transfer proteins transfer phospholipids as well as galactolipids across membranes. May play a role in wax or cutin deposition in the cell walls of expanding epidermal cells and certain secretory tissues. This is Non-specific lipid-transfer protein (MALD3) from Malus domestica (Apple).